We begin with the raw amino-acid sequence, 216 residues long: UDP-N-acetylbacillosamine N-acetyltransferase (216 aa).

The active-site Proton acceptor is the His137. Acetyl-CoA is bound at residue His146.

It belongs to the transferase hexapeptide repeat family. Forms oligomers.

It carries out the reaction UDP-N-acetylbacillosamine + acetyl-CoA = UDP-N,N'-diacetylbacillosamine + CoA + H(+). Its function is as follows. Catalyzes the conversion of UDP-2,4,6-trideoxy-2-acetamido-4-amino glucose to UDP-2,4,6-trideoxy-2,4-diacetamido glucose, commonly known as UDP-N,N'-diacetylbacillosamine (UDP-diNAcBac). The chain is UDP-N-acetylbacillosamine N-acetyltransferase from Bacillus subtilis (strain 168).